Reading from the N-terminus, the 214-residue chain is Heat shock protein 26 (214 aa).

S2 is subject to N-acetylserine. T42 carries the phosphothreonine modification. One can recognise a sHSP domain in the interval 86-207; that stretch reads GFPRSVAVPV…KNHVKKIEVS (122 aa). Position 90 is a phosphoserine (S90). At T163 the chain carries Phosphothreonine. The tract at residues 192–214 is disordered; that stretch reads KPQKDGKNHVKKIEVSSQESWGN. Residues 193-205 show a composition bias toward basic and acidic residues; that stretch reads PQKDGKNHVKKIE. Residues S208 and S211 each carry the phosphoserine modification.

The protein belongs to the small heat shock protein (HSP20) family. In terms of assembly, present in large complexes.

Functionally, not known. One of the major polypeptides produced on heat shock. This chain is Heat shock protein 26 (HSP26), found in Saccharomyces cerevisiae (strain ATCC 204508 / S288c) (Baker's yeast).